We begin with the raw amino-acid sequence, 241 residues long: Ribosome-inactivating protein luffaculin 1 (241 aa).

4 N-linked (GlcNAc...) asparagine glycosylation sites follow: Asn28, Asn33, Asn77, and Asn84. Glu159 is a catalytic residue. N-linked (GlcNAc...) asparagine glycosylation occurs at Asn205.

The protein belongs to the ribosome-inactivating protein family. Type 1 RIP subfamily.

It catalyses the reaction Endohydrolysis of the N-glycosidic bond at one specific adenosine on the 28S rRNA.. The polypeptide is Ribosome-inactivating protein luffaculin 1 (Luffa acutangula (Ridged gourd)).